Consider the following 840-residue polypeptide: V-type proton ATPase 116 kDa subunit a 4 (840 aa).

Residues 1-390 (MVSVFRSEEM…DAYGVGSYRE (390 aa)) are Cytoplasmic-facing. A helical transmembrane segment spans residues 391-409 (INPAPYTIITFPFLFAVMF). Residues 410–411 (GD) lie on the Vacuolar side of the membrane. A helical membrane pass occupies residues 412–428 (CGHGTVMLLAALWMILN). Topologically, residues 429-443 (ERRLLSQKTDNEIWN) are cytoplasmic. The chain crosses the membrane as a helical span at residues 444-473 (TFFHGRYLILLMGIFSIYTGLIYNDCFSKS). Over 474-538 (LNIFGSSWSV…ASNKLTFLNS (65 aa)) the chain is Vacuolar. Residues 539–558 (YKMKMSVILGIVQMVFGVIL) form a helical membrane-spanning segment. Topologically, residues 559-576 (SLFNHIYFRRTLNIILQF) are cytoplasmic. Residues 577-597 (IPEMIFILCLFGYLVFMIIFK) form a helical membrane-spanning segment. The Vacuolar segment spans residues 598–642 (WCCFDVHVSQHAPSILIHFINMFLFNYSDSSNAPLYKHQQEVQSF). A helical membrane pass occupies residues 643–662 (FVVMALISVPWMLLIKPFIL). Topologically, residues 663-727 (RASHRKSQLQ…DVFVHQAIHT (65 aa)) are cytoplasmic. Residues 675–704 (RIQEDATENIEGDSSSPSSRSGQRTSADTH) form a disordered region. Residues 728–752 (IEYCLGCISNTASYLRLWALSLAHA) form a helical membrane-spanning segment. Residues 753-773 (QLSEVLWTMVMNSGLQTRGWG) lie on the Vacuolar side of the membrane. A helical transmembrane segment spans residues 774–812 (GIVGVFIIFAVFAVLTVAILLIMEGLSAFLHALRLHWVE). Topologically, residues 813–840 (FQNKFYVGDGYKFSPFSFKHILDGTAEE) are cytoplasmic.

The protein belongs to the V-ATPase 116 kDa subunit family. In terms of assembly, V-ATPase is a heteromultimeric enzyme made up of two complexes: the ATP-hydrolytic V1 complex and the proton translocation V0 complex. The V1 complex consists of three catalytic AB heterodimers that form a heterohexamer, three peripheral stalks each consisting of EG heterodimers, one central rotor including subunits D and F, and the regulatory subunits C and H. The proton translocation complex V0 consists of the proton transport subunit a, a ring of proteolipid subunits c9c'', rotary subunit d, subunits e and f, and the accessory subunits ATP6AP1/Ac45 and ATP6AP2/PRR. Interacts with the V1 complex V-ATPase subunit A ATP6V1A. Interacts with the V0 complex V-ATPase subunit c ATP6V0C. As to expression, expressed in adult and fetal kidney. Found in the inner ear.

The protein resides in the apical cell membrane. It is found in the basolateral cell membrane. Subunit of the V0 complex of vacuolar(H+)-ATPase (V-ATPase), a multisubunit enzyme composed of a peripheral complex (V1) that hydrolyzes ATP and a membrane integral complex (V0) that translocates protons. V-ATPase is responsible for acidifying and maintaining the pH of intracellular compartments and in some cell types, is targeted to the plasma membrane, where it is responsible for acidifying the extracellular environment. Involved in normal vectorial acid transport into the urine by the kidney. This chain is V-type proton ATPase 116 kDa subunit a 4 (ATP6V0A4), found in Homo sapiens (Human).